A 68-amino-acid chain; its full sequence is Conotoxin Lt5.11 (68 aa).

Residues 1–19 (MLCLPVFIILLLLASPAAP) form the signal peptide. Positions 20–54 (KSLETRIQNDLIRAGLTDADLKTEKGFLSGLLNVA) are excised as a propeptide.

The protein belongs to the conotoxin T superfamily. Post-translationally, contains 2 disulfide bonds that can be either 'C1-C3, C2-C4' or 'C1-C4, C2-C3', since these disulfide connectivities have been observed for conotoxins with cysteine framework V (for examples, see AC P0DQQ7 and AC P81755). In terms of tissue distribution, expressed by the venom duct.

It localises to the secreted. This Conus litteratus (Lettered cone) protein is Conotoxin Lt5.11.